A 370-amino-acid polypeptide reads, in one-letter code: Polyadenylate-binding protein 4-like (370 aa).

RRM domains follow at residues 10 to 88, 98 to 174, 190 to 267, and 293 to 369; these read ASLY…WSQR, GNVF…RFKN, TNVY…RAQK, and VKLY…LAQR.

It belongs to the polyadenylate-binding protein type-1 family.

Its function is as follows. May bind RNA. The protein is Polyadenylate-binding protein 4-like (PABPC4L) of Homo sapiens (Human).